The following is a 68-amino-acid chain: Small cysteine-rich protein 5 (68 aa).

Residues 1–24 (MAVKFHLCLLLIILVGMGAHVAFA) form the signal peptide.

This sequence belongs to the Cnidaria small cysteine-rich protein (SCRiP) family. gamma subfamily. Contains 4 disulfide bonds.

The protein localises to the secreted. It is found in the nematocyst. Induces neurotoxic symptoms on zebrafish. Has also been claimed to be implied in calcification, but tests on homolog proteins suggest that proteins of this family have a neurotoxic function and not a calcification function. This chain is Small cysteine-rich protein 5, found in Orbicella faveolata (Mountainous star coral).